The sequence spans 318 residues: Ubiquitin-like domain-containing CTD phosphatase 1 (318 aa).

Residues 3-81 (LSLIIKWGGQ…IMMMGTREES (79 aa)) enclose the Ubiquitin-like domain. An FCP1 homology domain is found at 133 to 294 (PREGKKLLVL…LKLTQYLKEI (162 aa)). 3 residues coordinate Mg(2+): aspartate 143, aspartate 145, and aspartate 253.

Requires Mg(2+) as cofactor.

Its subcellular location is the nucleus. The catalysed reaction is O-phospho-L-seryl-[protein] + H2O = L-seryl-[protein] + phosphate. It carries out the reaction O-phospho-L-threonyl-[protein] + H2O = L-threonyl-[protein] + phosphate. Dephosphorylates 26S nuclear proteasomes, thereby decreasing their proteolytic activity. Recruited to the 19S regulatory particle of the 26S proteasome where it dephosphorylates 19S component PSMC2 which impairs PSMC2 ATPase activity and disrupts 26S proteasome assembly. Has also been reported to stimulate the proteolytic activity of the 26S proteasome. In Gallus gallus (Chicken), this protein is Ubiquitin-like domain-containing CTD phosphatase 1 (UBLCP1).